A 123-amino-acid polypeptide reads, in one-letter code: Beta-defensin 126 (123 aa).

Positions 1 to 20 (MKSLLFTLAVFMLLAQLVSG) are cleaved as a signal peptide. Residues 21–63 (NLYVKRCLNDIGICKKTCKPEEVRSEHGWVMCGKRKACCVPAD) form an in vitro binds to LPS, mediates antimicrobial activity and inhibits LPS-mediated inflammation region. 3 disulfide bridges follow: C27–C58, C34–C52, and C38–C59.

This sequence belongs to the beta-defensin family. Homodimer or homooligomer; disulfide-linked. In terms of processing, O-glycosylated; glycans contain sialic acids alpha(2,3)-linked to galactose and N-acetylgalactosamine. The C-terminal O-glycosylation contributes substantially to the sperm glyocalyx. High-level and epididymis-specific expression. Detected in epithelial cells lining the efferent ductules, initial segment, and cauda regions of the epididymis, but not on spermatozoa.

It is found in the secreted. Its function is as follows. Highly glycosylated atypical beta-defensin involved in several aspects of sperm function. Facilitates sperm transport in the female reproductive tract and contributes to sperm protection against immunodetection; both functions are probably implicating the negative surface charge provided by its O-linked oligosaccharides in the sperm glycocalyx. Involved in binding of sperm to oviductal epithelial cells to form a sperm reservoir until ovulation. Release from the sperm surface during capacitation and ovaluation by an elevation of oviductal fluid pH is unmasking other surface components and allows sperm to penetrate the cumulus matrix and bind to the zona pellucida of the oocyte. In vitro has antimicrobial activity and may inhibit LPS-mediated inflammation. In Macaca fascicularis (Crab-eating macaque), this protein is Beta-defensin 126 (DEFB126).